We begin with the raw amino-acid sequence, 295 residues long: Elongation factor Ts (295 aa).

Positions 79 to 82 are involved in Mg(2+) ion dislocation from EF-Tu; the sequence is TDFV.

The protein belongs to the EF-Ts family.

The protein resides in the cytoplasm. Its function is as follows. Associates with the EF-Tu.GDP complex and induces the exchange of GDP to GTP. It remains bound to the aminoacyl-tRNA.EF-Tu.GTP complex up to the GTP hydrolysis stage on the ribosome. This Bacillus cereus (strain B4264) protein is Elongation factor Ts.